Reading from the N-terminus, the 77-residue chain is Exodeoxyribonuclease 7 small subunit (77 aa).

The protein belongs to the XseB family. As to quaternary structure, heterooligomer composed of large and small subunits.

It is found in the cytoplasm. It carries out the reaction Exonucleolytic cleavage in either 5'- to 3'- or 3'- to 5'-direction to yield nucleoside 5'-phosphates.. Bidirectionally degrades single-stranded DNA into large acid-insoluble oligonucleotides, which are then degraded further into small acid-soluble oligonucleotides. The polypeptide is Exodeoxyribonuclease 7 small subunit (Lysinibacillus sphaericus (strain C3-41)).